A 326-amino-acid polypeptide reads, in one-letter code: Beta-1,3-galactosyltransferase 1 (326 aa).

The Cytoplasmic portion of the chain corresponds to 1-6 (MASKVS). Residues 7-26 (CLYVLTVVCWASALWYLSIT) form a helical; Signal-anchor for type II membrane protein membrane-spanning segment. Residues 27–326 (RPTSSYTGSK…DMSSKKHLRC (300 aa)) lie on the Lumenal side of the membrane. Residues Asn47 and Asn151 are each glycosylated (N-linked (GlcNAc...) asparagine).

Belongs to the glycosyltransferase 31 family. Mn(2+) is required as a cofactor.

The protein localises to the golgi apparatus membrane. The enzyme catalyses an N-acetyl-beta-D-glucosaminyl derivative + UDP-alpha-D-galactose = a beta-D-galactosyl-(1-&gt;3)-N-acetyl-beta-D-glucosaminyl derivative + UDP + H(+). It carries out the reaction a beta-D-GlcNAc-(1-&gt;3)-beta-D-Gal-(1-&gt;4)-beta-D-Glc-(1&lt;-&gt;1)-Cer(d18:1(4E)) + UDP-alpha-D-galactose = a beta-D-Gal-(1-&gt;3)-beta-D-GlcNAc-(1-&gt;3)-beta-D-Gal-(1-&gt;4)-beta-D-Glc-(1&lt;-&gt;1')-Cer(d18:1(4E)) + UDP + H(+). Its pathway is protein modification; protein glycosylation. Beta-1,3-galactosyltransferase that transfers galactose from UDP-galactose to substrates with a terminal beta-N-acetylglucosamine (beta-GlcNAc) residue. Involved in the biosynthesis of the carbohydrate moieties of glycolipids and glycoproteins. This chain is Beta-1,3-galactosyltransferase 1 (B3GALT1), found in Gorilla gorilla gorilla (Western lowland gorilla).